The following is a 400-amino-acid chain: LIM/homeobox protein Lhx3 (400 aa).

2 LIM zinc-binding domains span residues 34-84 (CAGC…CKDD) and 93-147 (CAAC…CKAD). Residue Ser-74 is modified to Phosphoserine. The segment at residues 160–219 (AKRPRTTITAKQLETLKSAYNTSPKPARHVREQLSSETGLDMRVVQVWFQNRRAKEKRLK) is a DNA-binding region (homeobox). Disordered stretches follow at residues 215–280 (EKRL…SSLG) and 297–400 (TLDH…HAQF). A Phosphotyrosine modification is found at Tyr-230. Phosphoserine occurs at positions 237 and 241. 2 stretches are compositionally biased toward pro residues: residues 319 to 334 (GIPP…PGPQ) and 352 to 361 (SGPPGGPPPM). The span at 368 to 380 (GPSSDLSTESSSG) shows a compositional bias: polar residues.

Interacts with POU1F1. At neuronal promoters, interacts with LDB1, in motor neurons LDB1 is displaced by ISL1 and a ternary complex is formed in which ISL1 contacts both LHX3 and LDB1; allosteric structural changes in the DNA binding domain of LHX3, induced by the ISL1-LHX3 interaction, may explain differences in sequence specificity of the different complexes. Interacts with LDB2. May interact with CITED2/MRG1. In terms of tissue distribution, mostly expressed in the pituitary anterior and intermediate lobes. It is also expressed in the pineal gland and transiently in the primordia of motor neurons including the spinal cord, pons and medulla oblongata.

The protein localises to the nucleus. In terms of biological role, transcription factor. Recognizes and binds to the consensus sequence motif 5'-AATTAATTA-3' in the regulatory elements of target genes, such as glycoprotein hormones alpha chain CGA and visual system homeobox CHX10, positively modulating transcription; transcription can be co-activated by LDB2. Synergistically enhances transcription from the prolactin promoter in cooperation with POU1F1/Pit-1. Required for the establishment of the specialized cells of the pituitary gland and the nervous system. Involved in the development of interneurons and motor neurons in cooperation with LDB1 and ISL1. The chain is LIM/homeobox protein Lhx3 (Lhx3) from Mus musculus (Mouse).